A 186-amino-acid polypeptide reads, in one-letter code: Heat shock protein 23 (186 aa).

Positions 53–161 constitute a sHSP domain; that stretch reads VGASSGSSGA…KGNERIVQIQ (109 aa). The interval 163–186 is disordered; the sequence is VGPAHLNVKENPKEAVEQDNGNDK. Positions 169–186 are enriched in basic and acidic residues; sequence NVKENPKEAVEQDNGNDK.

Belongs to the small heat shock protein (HSP20) family.

The sequence is that of Heat shock protein 23 (Hsp23) from Drosophila melanogaster (Fruit fly).